The following is a 226-amino-acid chain: Charged multivesicular body protein 5 (226 aa).

The stretch at isoleucine 21 to asparagine 93 forms a coiled coil. A compositionally biased stretch (basic and acidic residues) spans lysine 188 to glycine 198. Residues lysine 188–threonine 226 form a disordered region. Position 201 is a phosphoserine (serine 201). Threonine 226 is modified (phosphothreonine).

It belongs to the SNF7 family. Probable peripherally associated component of the endosomal sorting required for transport complex III (ESCRT-III).

Its subcellular location is the endosome membrane. Functionally, probable peripherally associated component of the endosomal sorting required for transport complex III (ESCRT-III) which is involved in multivesicular bodies (MVBs) formation and sorting of endosomal cargo proteins into MVBs. MVBs contain intraluminal vesicles (ILVs) that are generated by invagination and scission from the limiting membrane of the endosome and are delivered to lysosomes enabling degradation of membrane proteins. Specifically down-regulates Notch signaling activity in the germarium, probably by facilitating Notch endocytosis. In Drosophila melanogaster (Fruit fly), this protein is Charged multivesicular body protein 5.